Reading from the N-terminus, the 757-residue chain is uncharacterized protein (757 aa).

This is an uncharacterized protein from Dictyostelium discoideum (Social amoeba).